Here is a 466-residue protein sequence, read N- to C-terminus: UDP-N-acetylmuramoylalanine--D-glutamate ligase (466 aa).

ATP is bound at residue 121–127; sequence GTNGKST.

It belongs to the MurCDEF family.

The protein localises to the cytoplasm. It carries out the reaction UDP-N-acetyl-alpha-D-muramoyl-L-alanine + D-glutamate + ATP = UDP-N-acetyl-alpha-D-muramoyl-L-alanyl-D-glutamate + ADP + phosphate + H(+). Its pathway is cell wall biogenesis; peptidoglycan biosynthesis. Functionally, cell wall formation. Catalyzes the addition of glutamate to the nucleotide precursor UDP-N-acetylmuramoyl-L-alanine (UMA). This Bradyrhizobium diazoefficiens (strain JCM 10833 / BCRC 13528 / IAM 13628 / NBRC 14792 / USDA 110) protein is UDP-N-acetylmuramoylalanine--D-glutamate ligase.